The chain runs to 197 residues: dTTP/UTP pyrophosphatase (197 aa).

The Proton acceptor role is filled by D70.

Belongs to the Maf family. YhdE subfamily. Requires a divalent metal cation as cofactor.

It localises to the cytoplasm. It carries out the reaction dTTP + H2O = dTMP + diphosphate + H(+). The enzyme catalyses UTP + H2O = UMP + diphosphate + H(+). Functionally, nucleoside triphosphate pyrophosphatase that hydrolyzes dTTP and UTP. May have a dual role in cell division arrest and in preventing the incorporation of modified nucleotides into cellular nucleic acids. In Escherichia coli O157:H7, this protein is dTTP/UTP pyrophosphatase (yhdE).